The primary structure comprises 201 residues: Recombination protein RecR (201 aa).

The C4-type zinc finger occupies 57 to 72; it reads CSDCRTFTEQDVCAIC. A Toprim domain is found at 81–176; it reads GQICVVESPA…MASRIAHGVP (96 aa).

The protein belongs to the RecR family.

May play a role in DNA repair. It seems to be involved in an RecBC-independent recombinational process of DNA repair. It may act with RecF and RecO. This is Recombination protein RecR from Pectobacterium carotovorum subsp. carotovorum (strain PC1).